The sequence spans 768 residues: Dual specificity calcium/calmodulin-dependent 3',5'-cyclic nucleotide phosphodiesterase 1C (768 aa).

Methionine 1 is modified (N-acetylmethionine). The tract at residues 183–206 (EKPRFKSIVHAVQAGIFVERMYRR) is calmodulin-binding. Residues 211–588 (VGLSYPPAVI…ERWRAKVPKE (378 aa)) form the PDEase domain. Histidine 288 acts as the Proton donor in catalysis. Residues histidine 292, histidine 328, aspartate 329, and aspartate 436 each contribute to the Zn(2+) site. Aspartate 329 is a Mg(2+) binding site. Disordered regions lie at residues 513–557 (LIDE…INNS) and 584–719 (KVPK…PPLR). Composition is skewed to polar residues over residues 516–536 (ETSQTGGTGQRRSSLNSINSS) and 543–557 (VKSSGSEGSAPINNS). The segment covering 584 to 614 (KVPKEEKAKKEAEEKARLAAEEKQKEMEAKS) has biased composition (basic and acidic residues). Residues 631–641 (ETKGQVNGTRT) are compositionally biased toward polar residues. 2 stretches are compositionally biased toward basic and acidic residues: residues 642–659 (SKGDNPRGKNSKGDKAGE) and 665–692 (DLKDGKNKADKKDHSNTGNESKKADGTK). The segment covering 698–712 (SPAPSTSSTSRLTLP) has biased composition (low complexity).

Belongs to the cyclic nucleotide phosphodiesterase family. PDE1 subfamily. Homodimer. It depends on Zn(2+) as a cofactor. Requires Mg(2+) as cofactor. As to expression, highly expressed in olfactory epithelium and at moderate levels, in cerebellum, as well as weakly in forebrain, testis, heart and lung. In the olfactory epithelium, expressed by sensory neurons, but not epithelial cells.

It localises to the lysosome. The catalysed reaction is a nucleoside 3',5'-cyclic phosphate + H2O = a nucleoside 5'-phosphate + H(+). The enzyme catalyses 3',5'-cyclic GMP + H2O = GMP + H(+). It carries out the reaction 3',5'-cyclic AMP + H2O = AMP + H(+). Type I PDE are activated by the binding of calmodulin in the presence of Ca(2+). Functionally, calmodulin-dependent cyclic nucleotide phosphodiesterase with a dual specificity for the second messengers cAMP and cGMP, which are key regulators of many important physiological processes. Has a high affinity for both cAMP and cGMP. Modulates the amplitude and duration of the cAMP signal in sensory cilia in response to odorant stimulation, hence contributing to the generation of action potentials. Regulates smooth muscle cell proliferation. Regulates the stability of growth factor receptors, including PDGFRB. The protein is Dual specificity calcium/calmodulin-dependent 3',5'-cyclic nucleotide phosphodiesterase 1C of Rattus norvegicus (Rat).